A 247-amino-acid chain; its full sequence is Triosephosphate isomerase (247 aa).

8–10 (NWK) contributes to the substrate binding site. The active-site Electrophile is the histidine 95. The active-site Proton acceptor is glutamate 162. Residues glycine 168 and serine 207 each contribute to the substrate site.

This sequence belongs to the triosephosphate isomerase family. Homodimer.

It localises to the cytoplasm. The enzyme catalyses D-glyceraldehyde 3-phosphate = dihydroxyacetone phosphate. The protein operates within carbohydrate biosynthesis; gluconeogenesis. It participates in carbohydrate degradation; glycolysis; D-glyceraldehyde 3-phosphate from glycerone phosphate: step 1/1. Functionally, involved in the gluconeogenesis. Catalyzes stereospecifically the conversion of dihydroxyacetone phosphate (DHAP) to D-glyceraldehyde-3-phosphate (G3P). This is Triosephosphate isomerase from Gluconacetobacter diazotrophicus (strain ATCC 49037 / DSM 5601 / CCUG 37298 / CIP 103539 / LMG 7603 / PAl5).